Reading from the N-terminus, the 162-residue chain is MAETVADTRRLITKPQNLNDAYGPPSNFLEIDVSNPQTVGVGRGRFTTYEIRVKTNLPIFKLKESTVRRRYSDFEWLRSELERESKVVVPPLPGKAFLRQLPFRGDDGIFDDNFIEERKQGLEQFINKVAGHPLAQNERCLHMFLQDEIIDKSYTPSKIRHA.

A2 bears the N-acetylalanine mark. Residues 27–151 enclose the PX domain; sequence NFLEIDVSNP…HMFLQDEIID (125 aa). R43 is subject to Omega-N-methylarginine. 4 residues coordinate a 1,2-diacyl-sn-glycero-3-phospho-(1D-myo-inositol-3-phosphate): R70, S72, K95, and R118. Residue S72 is modified to Phosphoserine. K95 is covalently cross-linked (Glycyl lysine isopeptide (Lys-Gly) (interchain with G-Cter in SUMO2)). The tract at residues 147 to 162 is binds predominantly to PtdIns(P5) and weaker to PtdIns(P3) abd PtdIns(P4); involved in neurite outgrowth regulation; the sequence is DEIIDKSYTPSKIRHA.

The protein belongs to the sorting nexin family. As to quaternary structure, interacts with VPS26A, VPS29 and VPS35; the interaction with VPS35 is direct. The association with the retromer CSC subcomplex subunits is proposed to represent a functional distinct retromer variant described as SNX3-retromer complex. Interacts with USP10 and SCNN1A. Interacts with TRFC. Interacts with SNX8; 2 molecules of SNX8 seems to associate with one molecule of SNX3. Interacts with PTPRU. Interacts with MON2 and DOP1B. Ubiquitinated, leading to its proteasomal degradation. Deubiquitinated by USP10.

The protein resides in the early endosome. The protein localises to the cytoplasmic vesicle. It is found in the phagosome. In terms of biological role, phosphoinositide-binding protein required for multivesicular body formation. Specifically binds phosphatidylinositol 3-phosphate (PtdIns(P3)). Can also bind phosphatidylinositol 4-phosphate (PtdIns(P4)), phosphatidylinositol 5-phosphate (PtdIns(P5)) and phosphatidylinositol 3,5-biphosphate (PtdIns(3,5)P2). Plays a role in protein transport between cellular compartments. Together with RAB7A facilitates endosome membrane association of the retromer cargo-selective subcomplex (CSC/VPS). May in part act as component of the SNX3-retromer complex which mediates the retrograde endosome-to-TGN transport of WLS distinct from the SNX-BAR retromer pathway. Promotes stability and cell surface expression of epithelial sodium channel (ENAC) subunits SCNN1A and SCNN1G. Not involved in EGFR degradation. Involved in the regulation of phagocytosis in dendritic cells possibly by regulating EEA1 recruitment to the nascent phagosomes. Involved in iron homeostasis through regulation of endocytic recycling of the transferrin receptor TFRC presumably by delivering the transferrin:transferrin receptor complex to recycling endosomes; the function may involve the CSC retromer subcomplex. In the case of Salmonella enterica infection plays arole in maturation of the Salmonella-containing vacuole (SCV) and promotes recruitment of LAMP1 to SCVs. The protein is Sorting nexin-3 of Homo sapiens (Human).